Reading from the N-terminus, the 373-residue chain is Queuine tRNA-ribosyltransferase (373 aa).

Asp93 serves as the catalytic Proton acceptor. Substrate is bound by residues 93–97, Asp147, Gln190, and Gly219; that span reads DSGGF. The interval 250-256 is RNA binding; the sequence is GVGEPVD. Asp269 (nucleophile) is an active-site residue. An RNA binding; important for wobble base 34 recognition region spans residues 274–278; it reads TRLAR. Positions 307, 309, 312, and 338 each coordinate Zn(2+).

The protein belongs to the queuine tRNA-ribosyltransferase family. Homodimer. Within each dimer, one monomer is responsible for RNA recognition and catalysis, while the other monomer binds to the replacement base PreQ1. Zn(2+) is required as a cofactor.

It carries out the reaction 7-aminomethyl-7-carbaguanine + guanosine(34) in tRNA = 7-aminomethyl-7-carbaguanosine(34) in tRNA + guanine. It functions in the pathway tRNA modification; tRNA-queuosine biosynthesis. In terms of biological role, catalyzes the base-exchange of a guanine (G) residue with the queuine precursor 7-aminomethyl-7-deazaguanine (PreQ1) at position 34 (anticodon wobble position) in tRNAs with GU(N) anticodons (tRNA-Asp, -Asn, -His and -Tyr). Catalysis occurs through a double-displacement mechanism. The nucleophile active site attacks the C1' of nucleotide 34 to detach the guanine base from the RNA, forming a covalent enzyme-RNA intermediate. The proton acceptor active site deprotonates the incoming PreQ1, allowing a nucleophilic attack on the C1' of the ribose to form the product. After dissociation, two additional enzymatic reactions on the tRNA convert PreQ1 to queuine (Q), resulting in the hypermodified nucleoside queuosine (7-(((4,5-cis-dihydroxy-2-cyclopenten-1-yl)amino)methyl)-7-deazaguanosine). This Fusobacterium nucleatum subsp. nucleatum (strain ATCC 25586 / DSM 15643 / BCRC 10681 / CIP 101130 / JCM 8532 / KCTC 2640 / LMG 13131 / VPI 4355) protein is Queuine tRNA-ribosyltransferase.